A 480-amino-acid polypeptide reads, in one-letter code: DnaJ homolog subfamily A member 3, mitochondrial (480 aa).

R58 carries the omega-N-methylarginine; by CARM1 modification. In terms of domain architecture, J spans 93–158 (DYYQILGVPR…VKRKQYDAYG (66 aa)). Position 134 is an N6-acetyllysine (K134). The segment at 223-301 (GVNKEFTVNI…CRGAGQAKQK (79 aa)) adopts a CR-type zinc-finger fold. Residue C236 coordinates Zn(2+). CXXCXGXG motif repeat units follow at residues 236–243 (CERCNGKG), 253–260 (CHYCGGSG), 275–282 (CRRCGGRG), and 289–296 (CVVCRGAG). R238 is subject to Omega-N-methylarginine; by CARM1. Residues C239, C253, C256, C275, C278, C289, and C292 each coordinate Zn(2+). At R293 the chain carries Omega-N-methylarginine; by CARM1. The residue at position 398 (S398) is a Phosphoserine. Polar residues predominate over residues 443–456 (LTSSGGSTMDSSAG). Residues 443–471 (LTSSGGSTMDSSAGSKARREAGEDEEGFL) form a disordered region.

Interacts with JAK2, HSPA9B and IFN-gammaR2 chain. Interacts with Ras GTPase-activating protein 1 (RASA1). Isoform 2 interacts with MUSK (via the cytoplasmic domain). In terms of processing, tyrosine phosphorylated. In terms of tissue distribution, widely expressed with highest levels in heart, liver, lung and skeletal muscles. Also expressed in keratinocytes; expression level and distribution is altered in basal cell carcinomas.

It is found in the mitochondrion matrix. It localises to the cytoplasm. Its subcellular location is the cytosol. The protein resides in the postsynaptic cell membrane. Its function is as follows. Modulates apoptotic signal transduction or effector structures within the mitochondrial matrix. Affect cytochrome C release from the mitochondria and caspase 3 activation, but not caspase 8 activation. Isoform 1 increases apoptosis triggered by both TNF and the DNA-damaging agent mytomycin C; in sharp contrast, isoform 2 suppresses apoptosis. Can modulate IFN-gamma-mediated transcriptional activity. Isoform 2 may play a role in neuromuscular junction development as an effector of the MUSK signaling pathway. The protein is DnaJ homolog subfamily A member 3, mitochondrial (DNAJA3) of Homo sapiens (Human).